A 1032-amino-acid chain; its full sequence is MEGALTARDKVGVQDFVLLDAYTSESAFVDNLRKRFSENLIYTYIGTLLVSVNPYQELGIYTVSQMELYQGVNFFELPPHVYAIADNAYRMMCAELNNHFILISGESGAGKTEASKKILEYFAVTCPMTQSLQIARDRLLFSNPVLEAFGNARTLRNDNSSRFGKYMDIQFDFQGIPVGGHIISYLIEKSRVVYQNEGERNFHIFYQLLAGGEEERLSYLGLERDPQLYKYLSQGHCAKESSISDKNDWKTVSNAFSVIDFTEADLENLFGIIASVLHLGNIGFEEDDQGCATIPDTHEIKWIAKLLGVHPSVLLEALTHRKIEAKTEEVICPLTLELSVYARDAMAKAVYGRTFTWLVNKINSSLVNKVGQRILDPLLLLTWKTVIGLLDIYGFEVFDKNGFEQFCINYCNEKLQQLLIERTLKAEQAEYEMEGIEWEPIKYFNNKIICDLVEERHKGIISILDEECIRPGPATDLSFLEKLEEKVGKHAHFETRKLAGPKGRKRIGWMEFRLLHYAGEVTYCTKGFLEKNNDLLYRHLKEVLCKSKNIILRECFLLAELENRRRPPTVGTQFKNSLSSLLETLISKEPSYIRCIKPNDRKEPSKFDDFLIRHQIKYLGLMEHLRVRRAGFAYRRKYEHFLQRYKSLCPDTWPHWHGPPAEGVERLIKYIGYKPEEYKLGKTKIFIRFPRTLFATEDAFEFSKHQLVARIQATYKRCLGRREYVKKRQAAIKLEAHWRGALARKAIQRRKWAVRIIRKFIKGFISRNKPLCPDNEEFIVFVRKNYILNLRYHLPKTVLDKSWLRPPGILENASDLLRKMCVRNLVQKYCRGITAERKAMMQQKVVTSEIFRGRKDGYTESLNQPFVNSRIDEGDINPKVLQLISHEKIQYGVPVIKYDRKGFKARQRQLILTQKAAYVVELAKIKQKIEYSALKGVSTSNLSDGILVIHVSPEDSKQKGDAVLQCGHVFEAVTKLVMLVKKENIVNVVQGSLQFFISPGKEGTIVFDTGLEEQVYKNKNGQLTVVSVRRKS.

The Myosin motor domain maps to 12 to 701 (GVQDFVLLDA…TLFATEDAFE (690 aa)). Residue 105-112 (GESGAGKT) coordinates ATP. A Phosphoserine modification is found at Ser365. The tract at residues 578 to 600 (LSSLLETLISKEPSYIRCIKPND) is actin-binding. 2 consecutive IQ domains span residues 704–726 (KHQL…EYVK) and 727–756 (KRQA…AVRI). Residues 855–1029 (KDGYTESLNQ…NGQLTVVSVR (175 aa)) enclose the TH1 domain.

This sequence belongs to the TRAFAC class myosin-kinesin ATPase superfamily. Myosin family.

Functionally, myosins are actin-based motor molecules with ATPase activity. Unconventional myosins serve in intracellular movements. Their highly divergent tails are presumed to bind to membranous compartments, which would be moved relative to actin filaments. The chain is Unconventional myosin-Ih (MYO1H) from Homo sapiens (Human).